Reading from the N-terminus, the 350-residue chain is TATA box-binding protein-like 2 (350 aa).

Positions 82 to 150 (ENRDQTVTGN…QPSPETPNSN (69 aa)) are disordered. Positions 94–116 (ASEESCRTRDRQSQLQLPDEHGS) are enriched in basic and acidic residues. Composition is skewed to polar residues over residues 118–128 (LNLNSNSSPDP) and 139–150 (SNQPSPETPNSN).

It belongs to the TBP family. In terms of assembly, interacts with TAF3. As to expression, expressed in myotubes and myofibers (at protein level). Expressed in a wide variety of tissues with highest levels in heart, lung, liver, uterus and placenta and especially the gonads. Expression is higher in the ovary than the testis, and within the ovary expression is localized to the oocytes.

The protein localises to the cytoplasm. The protein resides in the nucleus. Transcription factor required in complex with TAF3 for the differentiation of myoblasts into myocytes. The complex replaces TFIID at specific promoters at an early stage in the differentiation process. The protein is TATA box-binding protein-like 2 of Mus musculus (Mouse).